Here is a 453-residue protein sequence, read N- to C-terminus: UDP-N-acetylmuramoylalanine--D-glutamate ligase (453 aa).

115–121 (GTNGKTT) serves as a coordination point for ATP.

It belongs to the MurCDEF family.

It is found in the cytoplasm. The catalysed reaction is UDP-N-acetyl-alpha-D-muramoyl-L-alanine + D-glutamate + ATP = UDP-N-acetyl-alpha-D-muramoyl-L-alanyl-D-glutamate + ADP + phosphate + H(+). The protein operates within cell wall biogenesis; peptidoglycan biosynthesis. Its function is as follows. Cell wall formation. Catalyzes the addition of glutamate to the nucleotide precursor UDP-N-acetylmuramoyl-L-alanine (UMA). The chain is UDP-N-acetylmuramoylalanine--D-glutamate ligase from Geotalea daltonii (strain DSM 22248 / JCM 15807 / FRC-32) (Geobacter daltonii).